Reading from the N-terminus, the 253-residue chain is tRNA (guanine-N(1)-)-methyltransferase (253 aa).

S-adenosyl-L-methionine contacts are provided by residues G113 and 133-138; that span reads IGDYVL.

It belongs to the RNA methyltransferase TrmD family. Homodimer.

Its subcellular location is the cytoplasm. It carries out the reaction guanosine(37) in tRNA + S-adenosyl-L-methionine = N(1)-methylguanosine(37) in tRNA + S-adenosyl-L-homocysteine + H(+). Specifically methylates guanosine-37 in various tRNAs. In Chloroflexus aurantiacus (strain ATCC 29366 / DSM 635 / J-10-fl), this protein is tRNA (guanine-N(1)-)-methyltransferase.